The chain runs to 460 residues: Argininosuccinate lyase (460 aa).

Belongs to the lyase 1 family. Argininosuccinate lyase subfamily.

It localises to the cytoplasm. It carries out the reaction 2-(N(omega)-L-arginino)succinate = fumarate + L-arginine. The protein operates within amino-acid biosynthesis; L-arginine biosynthesis; L-arginine from L-ornithine and carbamoyl phosphate: step 3/3. The polypeptide is Argininosuccinate lyase (Lacticaseibacillus paracasei (strain ATCC 334 / BCRC 17002 / CCUG 31169 / CIP 107868 / KCTC 3260 / NRRL B-441) (Lactobacillus paracasei)).